Here is a 127-residue protein sequence, read N- to C-terminus: MSANTEAQGSGRGLEAMKWIVVAILLIVAIVGNYLYRDMMLPLRALAVVILIAAAGGVALLTTKGKATVAFAREARTEVRKVIWPTRQETLHTTLIVAAVTAVMSLILWGLDGILVRLVSFITGLRF.

3 helical membrane passes run alanine 16–tyrosine 36, leucine 41–leucine 61, and isoleucine 96–valine 116.

This sequence belongs to the SecE/SEC61-gamma family. As to quaternary structure, component of the Sec protein translocase complex. Heterotrimer consisting of SecY, SecE and SecG subunits. The heterotrimers can form oligomers, although 1 heterotrimer is thought to be able to translocate proteins. Interacts with the ribosome. Interacts with SecDF, and other proteins may be involved. Interacts with SecA.

Its subcellular location is the cell inner membrane. Functionally, essential subunit of the Sec protein translocation channel SecYEG. Clamps together the 2 halves of SecY. May contact the channel plug during translocation. In Salmonella typhi, this protein is Protein translocase subunit SecE.